A 299-amino-acid chain; its full sequence is Aspartate carbamoyltransferase catalytic subunit (299 aa).

Residues R51 and T52 each contribute to the carbamoyl phosphate site. Residue K79 participates in L-aspartate binding. Positions 101, 130, and 133 each coordinate carbamoyl phosphate. Positions 163 and 215 each coordinate L-aspartate. Residues G256 and P257 each contribute to the carbamoyl phosphate site.

The protein belongs to the aspartate/ornithine carbamoyltransferase superfamily. ATCase family. As to quaternary structure, heterododecamer (2C3:3R2) of six catalytic PyrB chains organized as two trimers (C3), and six regulatory PyrI chains organized as three dimers (R2).

It catalyses the reaction carbamoyl phosphate + L-aspartate = N-carbamoyl-L-aspartate + phosphate + H(+). It functions in the pathway pyrimidine metabolism; UMP biosynthesis via de novo pathway; (S)-dihydroorotate from bicarbonate: step 2/3. In terms of biological role, catalyzes the condensation of carbamoyl phosphate and aspartate to form carbamoyl aspartate and inorganic phosphate, the committed step in the de novo pyrimidine nucleotide biosynthesis pathway. This is Aspartate carbamoyltransferase catalytic subunit from Ehrlichia chaffeensis (strain ATCC CRL-10679 / Arkansas).